Reading from the N-terminus, the 619-residue chain is DBH-like monooxygenase protein 2 (619 aa).

Positions 1-21 (MACVLLFRLFLLLVLAAFSQG) are cleaved as a signal peptide. Over 22 to 594 (KRLGPTSPLR…LSGSNTATLR (573 aa)) the chain is Extracellular. Residues 40–156 (RAVFLRWDFD…DTMRVLAAYG (117 aa)) enclose the DOMON domain. The active site involves Tyr-209. 2 cysteine pairs are disulfide-bonded: Cys-211–Cys-261 and Cys-248–Cys-271. 2 residues coordinate Cu cation: His-241 and His-242. Asn-250 carries N-linked (GlcNAc...) asparagine glycosylation. 3 residues coordinate Cu cation: His-309, His-390, and His-392. 2 cysteine pairs are disulfide-bonded: Cys-366–Cys-481 and Cys-444–Cys-466. Residue His-390 is part of the active site. The N-linked (GlcNAc...) asparagine glycan is linked to Asn-405. A Cu cation-binding site is contributed by Met-465. N-linked (GlcNAc...) asparagine glycosylation is present at Asn-477. A helical transmembrane segment spans residues 595–615 (PLPMIAVLFLQGSLSCLLAML). The Cytoplasmic portion of the chain corresponds to 616–619 (QTGV).

It belongs to the copper type II ascorbate-dependent monooxygenase family. Cu(2+) serves as cofactor. Expressed at low levels in thymus and testis.

The protein resides in the membrane. The polypeptide is DBH-like monooxygenase protein 2 (Moxd2) (Mus musculus (Mouse)).